The primary structure comprises 407 residues: Protein RecA (407 aa).

79–86 (GPESSGKT) is an ATP binding site. The interval 358–407 (LSLEASPEESDAKTLRRXASRGAGASSSRVQEGSAANDHFQDESTTAKLL) is disordered. The segment covering 377–386 (SRGAGASSSR) has biased composition (low complexity).

The protein belongs to the RecA family.

The protein resides in the cytoplasm. In terms of biological role, can catalyze the hydrolysis of ATP in the presence of single-stranded DNA, the ATP-dependent uptake of single-stranded DNA by duplex DNA, and the ATP-dependent hybridization of homologous single-stranded DNAs. It interacts with LexA causing its activation and leading to its autocatalytic cleavage. This is Protein RecA from Treponema pallidum (strain Nichols).